The chain runs to 236 residues: Small ribosomal subunit protein eS6 (236 aa).

Phosphoserine is present on residues serine 232 and serine 233.

This sequence belongs to the eukaryotic ribosomal protein eS6 family. Phosphorylated.

In Eremothecium gossypii (strain ATCC 10895 / CBS 109.51 / FGSC 9923 / NRRL Y-1056) (Yeast), this protein is Small ribosomal subunit protein eS6 (RPS6).